A 422-amino-acid chain; its full sequence is Adenylosuccinate synthetase (422 aa).

GTP contacts are provided by residues glycine 11 to lysine 17 and glycine 39 to threonine 41. The Proton acceptor role is filled by aspartate 12. Mg(2+) is bound by residues aspartate 12 and glycine 39. Residues aspartate 12–lysine 15, asparagine 37–histidine 40, threonine 129, arginine 143, asparagine 220, threonine 235, and arginine 299 contribute to the IMP site. The active-site Proton donor is histidine 40. Position 295 to 301 (valine 295 to arginine 301) interacts with substrate. GTP-binding positions include arginine 301, lysine 327–aspartate 329, and glycine 410–glycine 412.

This sequence belongs to the adenylosuccinate synthetase family. As to quaternary structure, homodimer. Mg(2+) serves as cofactor.

It localises to the cytoplasm. It catalyses the reaction IMP + L-aspartate + GTP = N(6)-(1,2-dicarboxyethyl)-AMP + GDP + phosphate + 2 H(+). The protein operates within purine metabolism; AMP biosynthesis via de novo pathway; AMP from IMP: step 1/2. Plays an important role in the de novo pathway and in the salvage pathway of purine nucleotide biosynthesis. Catalyzes the first committed step in the biosynthesis of AMP from IMP. The polypeptide is Adenylosuccinate synthetase (Arthroderma otae (strain ATCC MYA-4605 / CBS 113480) (Microsporum canis)).